A 213-amino-acid polypeptide reads, in one-letter code: tRNA (guanine-N(7)-)-methyltransferase (213 aa).

4 residues coordinate S-adenosyl-L-methionine: glutamate 44, glutamate 69, asparagine 96, and aspartate 118. Aspartate 118 is an active-site residue. Lysine 122 provides a ligand contact to substrate. Residues 124–129 are interaction with RNA; that stretch reads RHEKRR. Residues aspartate 154 and 191 to 194 contribute to the substrate site; that span reads TEYE.

Belongs to the class I-like SAM-binding methyltransferase superfamily. TrmB family.

The catalysed reaction is guanosine(46) in tRNA + S-adenosyl-L-methionine = N(7)-methylguanosine(46) in tRNA + S-adenosyl-L-homocysteine. It functions in the pathway tRNA modification; N(7)-methylguanine-tRNA biosynthesis. Its function is as follows. Catalyzes the formation of N(7)-methylguanine at position 46 (m7G46) in tRNA. The chain is tRNA (guanine-N(7)-)-methyltransferase from Bacillus licheniformis (strain ATCC 14580 / DSM 13 / JCM 2505 / CCUG 7422 / NBRC 12200 / NCIMB 9375 / NCTC 10341 / NRRL NRS-1264 / Gibson 46).